The sequence spans 83 residues: Keratin-associated protein 6-1 (83 aa).

One copy of the RPT 1-1 repeat lies at 9–15 (YGGLGCG). Residues 19–25 (YGGLGCG) form an RPT 1-2 repeat. The stretch at 44-55 (GYGYGSRSLCGS) is one RPT 2-1 repeat. Residues 56-67 (GYGYGSRSLCGS) form an RPT 2-2 repeat.

The protein belongs to the KRTAP type 6 family. Interacts with wool keratins.

Functionally, in the wool cortex, wool keratin intermediate filaments are embedded in an interfilamentous matrix, consisting of hair keratin-associated proteins (KRTAP), which are essential for the formation of a rigid and resistant wool shaft through their extensive disulfide bond cross-linking with abundant cysteine residues of wool keratins. The matrix proteins include the high-sulfur and high-glycine-tyrosine keratins. The polypeptide is Keratin-associated protein 6-1 (KRTAP6-1) (Ovis aries (Sheep)).